We begin with the raw amino-acid sequence, 530 residues long: UPF0422 protein lpp3030 (530 aa).

Positions 1-19 (MKFKKIILALACLSSPLYA) are cleaved as a signal peptide. The stretch at 20–66 (DQDQQLKSEIQRLQHQAEDLQAQLNRLQKQLANHKSSQQKHEQQAAA) forms a coiled coil. The segment at 50–81 (LANHKSSQQKHEQQAAAKPAEPKSKPTTKSGA) is disordered. The segment covering 63 to 79 (QAAAKPAEPKSKPTTKS) has biased composition (low complexity).

It belongs to the UPF0422 family.

This Legionella pneumophila (strain Paris) protein is UPF0422 protein lpp3030.